The primary structure comprises 179 residues: Large ribosomal subunit protein uL10 (179 aa).

Belongs to the universal ribosomal protein uL10 family. Part of the ribosomal stalk of the 50S ribosomal subunit. The N-terminus interacts with L11 and the large rRNA to form the base of the stalk. The C-terminus forms an elongated spine to which L12 dimers bind in a sequential fashion forming a multimeric L10(L12)X complex.

Forms part of the ribosomal stalk, playing a central role in the interaction of the ribosome with GTP-bound translation factors. The polypeptide is Large ribosomal subunit protein uL10 (Thermotoga neapolitana (strain ATCC 49049 / DSM 4359 / NBRC 107923 / NS-E)).